The chain runs to 1386 residues: DNA-directed RNA polymerase subunit beta (1386 aa).

The protein belongs to the RNA polymerase beta chain family. In terms of assembly, in plastids the minimal PEP RNA polymerase catalytic core is composed of four subunits: alpha, beta, beta', and beta''. When a (nuclear-encoded) sigma factor is associated with the core the holoenzyme is formed, which can initiate transcription.

The protein localises to the plastid. The protein resides in the chloroplast. The enzyme catalyses RNA(n) + a ribonucleoside 5'-triphosphate = RNA(n+1) + diphosphate. Its function is as follows. DNA-dependent RNA polymerase catalyzes the transcription of DNA into RNA using the four ribonucleoside triphosphates as substrates. The chain is DNA-directed RNA polymerase subunit beta from Thalassiosira pseudonana (Marine diatom).